The sequence spans 169 residues: Phosphopantetheine adenylyltransferase (169 aa).

Serine 10 lines the substrate pocket. ATP is bound by residues 10 to 11 (SF) and histidine 18. Residues lysine 42, threonine 79, and arginine 93 each contribute to the substrate site. ATP contacts are provided by residues 94-96 (GLR), glutamate 104, and 129-135 (VRPITAT).

It belongs to the bacterial CoaD family. In terms of assembly, homohexamer. Requires Mg(2+) as cofactor.

The protein resides in the cytoplasm. It catalyses the reaction (R)-4'-phosphopantetheine + ATP + H(+) = 3'-dephospho-CoA + diphosphate. The protein operates within cofactor biosynthesis; coenzyme A biosynthesis; CoA from (R)-pantothenate: step 4/5. Functionally, reversibly transfers an adenylyl group from ATP to 4'-phosphopantetheine, yielding dephospho-CoA (dPCoA) and pyrophosphate. This is Phosphopantetheine adenylyltransferase from Rhodopseudomonas palustris (strain ATCC BAA-98 / CGA009).